A 101-amino-acid chain; its full sequence is Putative pterin-4-alpha-carbinolamine dehydratase (101 aa).

The protein belongs to the pterin-4-alpha-carbinolamine dehydratase family.

It catalyses the reaction (4aS,6R)-4a-hydroxy-L-erythro-5,6,7,8-tetrahydrobiopterin = (6R)-L-erythro-6,7-dihydrobiopterin + H2O. This Nitrobacter winogradskyi (strain ATCC 25391 / DSM 10237 / CIP 104748 / NCIMB 11846 / Nb-255) protein is Putative pterin-4-alpha-carbinolamine dehydratase.